The chain runs to 86 residues: Exopolysaccharide production repressor protein (86 aa).

A helical transmembrane segment spans residues phenylalanine 18–phenylalanine 38. The segment at threonine 44 to proline 86 is disordered. A compositionally biased stretch (basic and acidic residues) spans proline 61–glutamate 70.

It localises to the cell membrane. It participates in glycan metabolism; exopolysaccharide biosynthesis. Its function is as follows. Inhibition of exopolysaccharide synthesis (EPS) and nodulation ability (NOD). This Rhizobium leguminosarum bv. phaseoli protein is Exopolysaccharide production repressor protein (exoX).